Here is a 255-residue protein sequence, read N- to C-terminus: D-aminoacyl-tRNA deacylase (255 aa).

Belongs to the DtdA deacylase family. In terms of assembly, monomer. Zn(2+) serves as cofactor.

It carries out the reaction a D-aminoacyl-tRNA + H2O = a tRNA + a D-alpha-amino acid + H(+). The catalysed reaction is glycyl-tRNA(Ala) + H2O = tRNA(Ala) + glycine + H(+). Functionally, D-aminoacyl-tRNA deacylase with broad substrate specificity. By recycling D-aminoacyl-tRNA to D-amino acids and free tRNA molecules, this enzyme counteracts the toxicity associated with the formation of D-aminoacyl-tRNA entities in vivo. The sequence is that of D-aminoacyl-tRNA deacylase from Picrophilus torridus (strain ATCC 700027 / DSM 9790 / JCM 10055 / NBRC 100828 / KAW 2/3).